A 1585-amino-acid chain; its full sequence is MSPPISPTPPPLQPPFPPTAIARGPDRPDPPPQHQQAAESLVNAAAQHVAPTCPPTSDELPQMEDQATNSSNDSLIPSRQAPNQEETENAITAGTPPDEMEPTKDAQTVRFSSSSPASYSTHEYPTEEINEPRTSSRAPNTASSQMAESSFDFRSSRDIGSIRMGASALVSALNALPWEEDDDSDDGEDDDEFIEPARGSSSTIYERKQRPQTPSTSHGFHPTHTLHFPFRQNAIARRACQPGTTELDYQYATPETSSRRTSAAGSESSSEGEVPLPKGFVSHPNLIVPSGEGEAAAHPDPKLISDRITKEQQIADVEEQAEILRSAEEQEMRLGKEFVPPKSRDSADLNVDAALREGGSEREDVIEEQMQTNEAEKRLTRNEKLAERLMEVFGLEEREEVLEEMKCWLLRSVMLKGYMYLTKRHICFFANMPNENNLLVKSGPLHKKASRSKLNTKFWVVLKNDVLSWYESTSDPYFPKGNISLQYCHSCDAVSGTRFKVRTSERNYTFTADTESSRDEWVKAIQKVMFKTQHEGETIKLIIPLEAIVDVEKSPTLEFTETIEVKCIDAEDQMSVDSYFFASFPDNDYAFSAIQKLVRERPSPPELPRISSVTTIHANQEPLDTSHATIKRHGTDSSAEKLGMASHRPFRKISSVLKPLILKSSDGEPLEEHSQGPHHNDEDASHLPHIEAISNRRRSEEESDNDYFDGYPPRQVGPPPPSMNDDARNWRPSWIRKPASKLFGSSPSGSFVSHPGRLPTDSSTTVTESGPSLRSRTGRTKQASVTEVIEPPIQYEEEVSEDEMSNKPSVVDSNSAETARKRAARLSWTSETSSGSQMVKSKSDFSMLGSESGHSESAETVRKFRTFFALSDKEELIDHFPGYLYRVLPVSGRFFISTNYFCFRSSQLLYKTKESFRLMIIPIRDLYGLKAQKAFRFGHSGLTVVIKGHEEIFIEFRSASRRKACIALLEERMEAVRLSGENTIVDSHKIEARIMEDLDESTPVEPKSPWPVSPSPLFGSTTSTSFLEFKPEPMKITCLTIGSRGDVQPYIALCKGLQAEGHITKIATHGEYKAWVEGHGIAFESVGGDPAELMQMCVDNGMFTVSFLKEGLQKFRGWLDDLLNSSWEACQGSDLLIESPSAMSGIHVAEALRIPYYRAFTMPWTRTRAYPHAFAVPEHGRGGPYNYMTYTMFDQVFWRAISGQVNRWRRNVLGLDATTFDKMEQHKVPFLYNFSPTVVPPPLDWTEWIHVTGYWFLDKADEKQGEKSWTPPQGLVDFIDKAHGEEKKVVYIGFGSIVVSDPEEMTRCVVEAVVNSGVCAILSKGWSDRGSKKGEPKGDSEGADGVKYPPEIFAIDSIDHGWLFPRIDAACHHGGAGTTGASLRAGIPTIIKPFFGDQAFWAERVESLNVGSSIRRLTSHQLASALIKATTDEKQISKARVVGEMIRKENGITRAIEAIYRDLEYAKSIIKSLPSTDDRTPERISSLLHPLTTADLSFNRVRSRSRSRSRSSQGRFSPRRHTVDDDGWSVVSGGSRSRSGSASAVTSPERRPLNIGSALGSHVFKTALLPNTFGKWRNLEEGDDR.

A compositionally biased stretch (pro residues) spans methionine 1–proline 18. 3 disordered regions span residues methionine 1–phenylalanine 151, proline 177–threonine 225, and tyrosine 249–glycine 279. Polar residues-rich tracts occupy residues aspartate 65–threonine 92, aspartate 105–glutamate 123, and proline 132–glutamate 148. Residues tryptophan 178–isoleucine 194 show a composition bias toward acidic residues. Over residues glutamate 255–glutamate 273 the composition is skewed to low complexity. The GRAM 1 domain occupies glutamate 387–proline 555. Residues leucine 438–phenylalanine 530 form the PH domain. Disordered regions lie at residues threonine 625 to alanine 645 and aspartate 666 to serine 852. Residues leucine 670 to histidine 689 show a composition bias toward basic and acidic residues. 3 stretches are compositionally biased toward polar residues: residues threonine 760–valine 785, asparagine 806–glutamate 817, and serine 827–lysine 840. The region spanning arginine 862–lysine 933 is the GRAM 2 domain. The UDP-alpha-D-glucose site is built by serine 1043, arginine 1044, aspartate 1046, isoleucine 1358, histidine 1360, histidine 1373, glycine 1377, threonine 1378, aspartate 1397, and glutamine 1398. The interval asparagine 1499 to proline 1552 is disordered. Over residues serine 1529–valine 1545 the composition is skewed to low complexity.

Belongs to the glycosyltransferase 28 family.

It is found in the cytoplasm. The protein localises to the membrane. It carries out the reaction a sterol + UDP-alpha-D-glucose = a sterol 3-beta-D-glucoside + UDP + H(+). The enzyme catalyses ergosterol + UDP-alpha-D-glucose = ergosteryl 3-beta-D-glucoside + UDP + H(+). Its function is as follows. Sterol glycosyltransferase responsible for the glycosylation of ergosterol to form ergosterol-glucoside. The chain is Sterol 3-beta-glucosyltransferase from Cryptococcus neoformans var. neoformans serotype D (strain B-3501A) (Filobasidiella neoformans).